A 270-amino-acid chain; its full sequence is Tryptophan synthase alpha chain (270 aa).

Residues glutamate 49 and aspartate 60 each act as proton acceptor in the active site.

The protein belongs to the TrpA family. Tetramer of two alpha and two beta chains.

It carries out the reaction (1S,2R)-1-C-(indol-3-yl)glycerol 3-phosphate + L-serine = D-glyceraldehyde 3-phosphate + L-tryptophan + H2O. It participates in amino-acid biosynthesis; L-tryptophan biosynthesis; L-tryptophan from chorismate: step 5/5. In terms of biological role, the alpha subunit is responsible for the aldol cleavage of indoleglycerol phosphate to indole and glyceraldehyde 3-phosphate. The protein is Tryptophan synthase alpha chain of Buchnera aphidicola subsp. Diuraphis noxia.